Reading from the N-terminus, the 231-residue chain is Dihydropteridine reductase (231 aa).

6–30 (LVLGGSGALGAEVVKFFKSKSWNTI) provides a ligand contact to NADP(+). The Proton acceptor role is filled by Y138.

The protein belongs to the short-chain dehydrogenases/reductases (SDR) family. Homodimer.

The enzyme catalyses 5,6,7,8-tetrahydropteridine + NAD(+) = 6,7-dihydropteridine + NADH + H(+). It carries out the reaction 5,6,7,8-tetrahydropteridine + NADP(+) = 6,7-dihydropteridine + NADPH + H(+). Functionally, the product of this enzyme, tetrahydrobiopterin (BH-4), is an essential cofactor for phenylalanine, tyrosine, and tryptophan hydroxylases. The chain is Dihydropteridine reductase (qdpr) from Dictyostelium discoideum (Social amoeba).